Reading from the N-terminus, the 414-residue chain is Probable solanesyl-diphosphate synthase 3, chloroplastic (414 aa).

Residues 1-23 (MAAPSSLASSSHLSRRATAAASP) are compositionally biased toward low complexity. A disordered region spans residues 1 to 36 (MAAPSSLASSSHLSRRATAAASPSIPPPSPPPPPQR). Residues 1 to 72 (MAAPSSLASS…KPGVAAVDVP (72 aa)) constitute a chloroplast transit peptide. The span at 24–35 (SIPPPSPPPPPQ) shows a compositional bias: pro residues. 3 residues coordinate isopentenyl diphosphate: Lys134, Arg137, and His172. The Mg(2+) site is built by Asp179 and Asp183. Arg188 lines the an all-trans-polyprenyl diphosphate pocket. Position 189 (Arg189) interacts with isopentenyl diphosphate. The an all-trans-polyprenyl diphosphate site is built by Lys265, Thr266, Gln303, and Lys320.

This sequence belongs to the FPP/GGPP synthase family. In terms of assembly, homodimer. It depends on Mg(2+) as a cofactor.

It is found in the plastid. It localises to the chloroplast. The catalysed reaction is 7 isopentenyl diphosphate + (2E)-geranyl diphosphate = all-trans-nonaprenyl diphosphate + 7 diphosphate. In terms of biological role, involved in providing solanesyl diphosphate for plastoquinone-9 (PQ-9) formation. In Oryza sativa subsp. japonica (Rice), this protein is Probable solanesyl-diphosphate synthase 3, chloroplastic.